The primary structure comprises 518 residues: F-box protein At1g47056 (518 aa).

The F-box domain maps to 37-82 (PDYTSSLPDECLALVFQFLNSGNRKRCALVCRRWMIVEGQNRYRLS).

The chain is F-box protein At1g47056 from Arabidopsis thaliana (Mouse-ear cress).